The sequence spans 418 residues: Gamma-glutamyl phosphate reductase (418 aa).

Belongs to the gamma-glutamyl phosphate reductase family.

Its subcellular location is the cytoplasm. The catalysed reaction is L-glutamate 5-semialdehyde + phosphate + NADP(+) = L-glutamyl 5-phosphate + NADPH + H(+). It functions in the pathway amino-acid biosynthesis; L-proline biosynthesis; L-glutamate 5-semialdehyde from L-glutamate: step 2/2. Functionally, catalyzes the NADPH-dependent reduction of L-glutamate 5-phosphate into L-glutamate 5-semialdehyde and phosphate. The product spontaneously undergoes cyclization to form 1-pyrroline-5-carboxylate. This chain is Gamma-glutamyl phosphate reductase, found in Geobacter sp. (strain M21).